We begin with the raw amino-acid sequence, 73 residues long: Antimicrobial peptide TsAP-2 (73 aa).

Positions methionine 1 to alanine 22 are cleaved as a signal peptide. Lysine 39 is modified (lysine amide). Residues glutamate 45 to tyrosine 73 constitute a propeptide that is removed on maturation.

Belongs to the non-disulfide-bridged peptide (NDBP) superfamily. Short antimicrobial peptide (group 4) family. As to expression, expressed by the venom gland.

The protein resides in the secreted. Functionally, antimicrobial peptide. Has a high antibacterial activity against the Gram-positive bacterium S.aureus (MIC=5-17.30 uM), the methicillin-resistant S.aureus (MRSA) (MIC=17.30 uM), and E.faecalis (MIC=69.23 uM). Has antifungal activity against Candida spp. and one Cryptococcus neoformans strains with MICs values ranging from 6.25 to 100 uM. Also shows an inhibitory activity on C.albicans biofilms at high concentrations. Has a moderate hemolytic potency (18% at 20 uM). Also inhibits the growth of the five human cancer cell lines tested (the squamous carcinoma cell line H157 (IC(50)=4.1 uM), the lung adenocarcinoma cell line H838 (11.0 uM), the breast carcinoma cell line MCF-7 (6.4 uM), the androgen-independent prostate adenocarcinoma cell line PC3 (13.3 uM) and the glioblastoma cell line U251-MG (15.4 uM)). In the model of polymicrobial sepsis, it exhibits an antibiotic effect, reducing the levels of microorganisms in the infectious focus and the inflammatory responses in the lung and cecum of septic animals. The polypeptide is Antimicrobial peptide TsAP-2 (Tityus serrulatus (Brazilian scorpion)).